We begin with the raw amino-acid sequence, 352 residues long: Ion-translocating oxidoreductase complex subunit D (352 aa).

5 helical membrane-spanning segments follow: residues 20–40 (IMLLVLLAAVPGIAAQLWFFG), 42–62 (GTLVQILLASVSALLAEALVL), 78–109 (ALLTGLLLAVSIPPLAPWWMVVLGTVFAVIIA), 123–143 (PAMIGYVVLLISFPVQMTSWL), and 148–168 (IAVNIPGFIDAIQVIFSGHIT). The residue at position 187 (Thr-187) is an FMN phosphoryl threonine. 5 consecutive transmembrane segments (helical) span residues 215–235 (LAGVGWQWVNLAWLAGGVWLL), 242–262 (WHIPLSFLVTLALCATLGWLF), 267–287 (LAAPQIHLLSGATMLGAFFIL), 301–321 (LIFGALAGLLVWLIRSFGGYP), and 322–342 (DGVAFAVLLANITVPLIDYYT).

Belongs to the NqrB/RnfD family. In terms of assembly, the complex is composed of six subunits: RsxA, RsxB, RsxC, RsxD, RsxE and RsxG. Requires FMN as cofactor.

It localises to the cell inner membrane. In terms of biological role, part of a membrane-bound complex that couples electron transfer with translocation of ions across the membrane. Required to maintain the reduced state of SoxR. The polypeptide is Ion-translocating oxidoreductase complex subunit D (Escherichia coli (strain SMS-3-5 / SECEC)).